A 174-amino-acid polypeptide reads, in one-letter code: Thiol-disulfide oxidoreductase ResA (174 aa).

A helical; Signal-anchor for type II membrane protein transmembrane segment spans residues 11-30 (TVILLLLLAALGYTIYANFF). The Thioredoxin domain maps to 36–174 (VAVGSTAPDF…IKQHLESIKP (139 aa)). Cysteines 74 and 77 form a disulfide.

It belongs to the thioredoxin family. ResA subfamily.

The protein localises to the cell membrane. Its pathway is protein modification; cytochrome c assembly. In terms of biological role, thiol-disulfide oxidoreductase which is required in disulfide reduction during c-type cytochrome synthesis. May accept reducing equivalents from CcdA, leading to breakage of disulfide bonds in apocytochrome c; following this reduction heme can be covalently attached. The protein is Thiol-disulfide oxidoreductase ResA of Geobacillus thermodenitrificans (strain NG80-2).